Reading from the N-terminus, the 117-residue chain is Large ribosomal subunit protein uL18 (117 aa).

This sequence belongs to the universal ribosomal protein uL18 family. In terms of assembly, part of the 50S ribosomal subunit; part of the 5S rRNA/L5/L18/L25 subcomplex. Contacts the 5S and 23S rRNAs.

Functionally, this is one of the proteins that bind and probably mediate the attachment of the 5S RNA into the large ribosomal subunit, where it forms part of the central protuberance. This Polynucleobacter asymbioticus (strain DSM 18221 / CIP 109841 / QLW-P1DMWA-1) (Polynucleobacter necessarius subsp. asymbioticus) protein is Large ribosomal subunit protein uL18.